We begin with the raw amino-acid sequence, 525 residues long: Mitochondrial-processing peptidase subunit alpha (525 aa).

The N-terminal 33 residues, 1 to 33 (MAAVVLAATRLLRGSGSWGCSRLRFGPPAYRRF), are a transit peptide targeting the mitochondrion. Lysine 64 is subject to N6-succinyllysine. The residue at position 299 (lysine 299) is an N6-acetyllysine.

This sequence belongs to the peptidase M16 family. As to quaternary structure, heterodimer of PMPCA (alpha) and PMPCB (beta) subunits, forming the mitochondrial processing protease (MPP) in which PMPCA is involved in substrate recognition and binding and PMPCB is the catalytic subunit.

Its subcellular location is the mitochondrion matrix. The protein resides in the mitochondrion inner membrane. In terms of biological role, substrate recognition and binding subunit of the essential mitochondrial processing protease (MPP), which cleaves the mitochondrial sequence off newly imported precursors proteins. The polypeptide is Mitochondrial-processing peptidase subunit alpha (PMPCA) (Pongo abelii (Sumatran orangutan)).